The chain runs to 188 residues: GTPase KRas (188 aa).

Residues 10-18 (GAGGVGKSA), 29-35 (VDEYDPT), 59-60 (AG), and 116-119 (NKYD) each bind GTP. An Effector region motif is present at residues 32-40 (YDPTIEDSY). Residues 167–188 (KEKMSKEGKKKKKKSKTKCILM) are disordered. Residue Cys-185 is modified to Cysteine methyl ester. Residue Cys-185 is the site of S-farnesyl cysteine attachment. Residues 186 to 188 (ILM) constitute a propeptide, removed in mature form.

This sequence belongs to the small GTPase superfamily. Ras family.

It localises to the cell membrane. It is found in the cytoplasm. The enzyme catalyses GTP + H2O = GDP + phosphate + H(+). Its activity is regulated as follows. Alternates between an inactive form bound to GDP and an active form bound to GTP. Activated by a guanine nucleotide-exchange factor (GEF) and inactivated by a GTPase-activating protein (GAP). In terms of biological role, ras proteins bind GDP/GTP and possess intrinsic GTPase activity. Plays an important role in the regulation of cell proliferation. May play a role in promoting oncogenic events by inducing transcriptional silencing of tumor suppressor genes (TSGs). The chain is GTPase KRas (kras) from Kryptolebias marmoratus (Mangrove killifish).